The chain runs to 623 residues: uncharacterized protein (623 aa).

Residues R24–N51 adopt a coiled-coil conformation. Disordered stretches follow at residues T148–Q170, F240–P343, A362–I393, S454–S531, and K585–L607. Over residues L243–G259 the composition is skewed to acidic residues. Over residues V328–P343 the composition is skewed to polar residues. Residues P364–P379 are compositionally biased toward low complexity. A compositionally biased stretch (polar residues) spans V384–I393. A compositionally biased stretch (low complexity) spans P484–P495. The segment covering T496–K506 has biased composition (polar residues). Residues P590–A606 show a composition bias toward pro residues.

This is an uncharacterized protein from Arabidopsis thaliana (Mouse-ear cress).